The chain runs to 342 residues: S-adenosylmethionine:tRNA ribosyltransferase-isomerase (342 aa).

The protein belongs to the QueA family. In terms of assembly, monomer.

Its subcellular location is the cytoplasm. The catalysed reaction is 7-aminomethyl-7-carbaguanosine(34) in tRNA + S-adenosyl-L-methionine = epoxyqueuosine(34) in tRNA + adenine + L-methionine + 2 H(+). Its pathway is tRNA modification; tRNA-queuosine biosynthesis. Its function is as follows. Transfers and isomerizes the ribose moiety from AdoMet to the 7-aminomethyl group of 7-deazaguanine (preQ1-tRNA) to give epoxyqueuosine (oQ-tRNA). The chain is S-adenosylmethionine:tRNA ribosyltransferase-isomerase from Bacillus subtilis (strain 168).